The primary structure comprises 421 residues: MGLPPLLSLPSNSAPRSLGRVETPPEVVDFMVSLAEAPRGGRVLEPACAHGPFLRAFREAHGTAYRFVGVEIDPKALDLPPWAEGILADFLLWEPGEAFDLILGNPPYGIVGEASKYPIHVFKAVKDLYKKAFSTWKGKYNLYGAFLEKAVRLLKPGGVLVFVVPATWLVLEDFALLREFLAREGKTSVYYLGEVFPQKKVSAVVIRFQKSGKGLSLWDTQESESGFTPILWAEYPHWEGEIIRFETEETRKLEISGMPLGDLFHIRFAARSPEFKKHPAVRKEPGPGLVPVLTGRNLKPGWVDYEKNHSGLWMPKERAKELRDFYATPHLVVAHTKGTRVVAAWDERAYPWREEFHLLPKEGVRLDPSSLVQWLNSEAMQKHVRTLYRDFVPHLTLRMLERLPVRREYGFHTSPESARNF.

The span at 1–18 (MGLPPLLSLPSNSAPRSL) shows a compositional bias: low complexity. The interval 1-20 (MGLPPLLSLPSNSAPRSLGR) is disordered. S-adenosyl-L-methionine is bound by residues threonine 23, 45–48 (EPAC), glutamate 71, aspartate 89, and proline 107.

This sequence belongs to the N(4)/N(6)-methyltransferase family.

The catalysed reaction is a 2'-deoxyadenosine in DNA + S-adenosyl-L-methionine = an N(6)-methyl-2'-deoxyadenosine in DNA + S-adenosyl-L-homocysteine + H(+). Functionally, a gamma subtype methylase that recognizes the double-stranded sequence 5'-TCGA-3', methylates A-4 on both strands and protects the DNA from cleavage by the TaqI endonuclease. The polypeptide is Type II methyltransferase M.TaqI (taqIM) (Thermus aquaticus).